Consider the following 395-residue polypeptide: Elongation factor Tu (395 aa).

Positions 10-204 (KPHLNIGTIG…AVDTWIELPE (195 aa)) constitute a tr-type G domain. Residues 19–26 (GHVDHGKT) form a G1 region. 19–26 (GHVDHGKT) lines the GTP pocket. T26 contributes to the Mg(2+) binding site. The interval 60-64 (GITIN) is G2. The tract at residues 81–84 (DCPG) is G3. GTP is bound by residues 81 to 85 (DCPGH) and 136 to 139 (NKVD). Positions 136-139 (NKVD) are G4. The interval 174–176 (SAL) is G5.

It belongs to the TRAFAC class translation factor GTPase superfamily. Classic translation factor GTPase family. EF-Tu/EF-1A subfamily. As to quaternary structure, monomer.

It is found in the cytoplasm. The enzyme catalyses GTP + H2O = GDP + phosphate + H(+). Functionally, GTP hydrolase that promotes the GTP-dependent binding of aminoacyl-tRNA to the A-site of ribosomes during protein biosynthesis. This chain is Elongation factor Tu, found in Christiangramia forsetii (strain DSM 17595 / CGMCC 1.15422 / KT0803) (Gramella forsetii).